The primary structure comprises 511 residues: V-type proton ATPase subunit B, brain isoform (511 aa).

Arg-400 contributes to the ATP binding site.

It belongs to the ATPase alpha/beta chains family. As to quaternary structure, V-ATPase is a heteromultimeric enzyme made up of two complexes: the ATP-hydrolytic V1 complex and the proton translocation V0 complex. The V1 complex consists of three catalytic AB heterodimers that form a heterohexamer, three peripheral stalks each consisting of EG heterodimers, one central rotor including subunits D and F, and the regulatory subunits C and H. The proton translocation complex V0 consists of the proton transport subunit a, a ring of proteolipid subunits c9c'', rotary subunit d, subunits e and f, and the accessory subunits ATP6AP1/Ac45 and ATP6AP2/PRR. As to expression, kidney; localizes to early distal nephron, encompassing thick ascending limbs and distal convoluted tubules (at protein level).

Its subcellular location is the apical cell membrane. It localises to the melanosome. The protein localises to the cytoplasm. The protein resides in the cytoplasmic vesicle. It is found in the secretory vesicle. Its subcellular location is the synaptic vesicle membrane. It localises to the clathrin-coated vesicle membrane. Functionally, non-catalytic subunit of the V1 complex of vacuolar(H+)-ATPase (V-ATPase), a multisubunit enzyme composed of a peripheral complex (V1) that hydrolyzes ATP and a membrane integral complex (V0) that translocates protons. V-ATPase is responsible for acidifying and maintaining the pH of intracellular compartments and in some cell types, is targeted to the plasma membrane, where it is responsible for acidifying the extracellular environment. In renal intercalated cells, can partially compensate the lack of ATP6V1B1 and mediate secretion of protons (H+) into the urine under base-line conditions but not in conditions of acid load. The sequence is that of V-type proton ATPase subunit B, brain isoform (ATP6V1B2) from Homo sapiens (Human).